Consider the following 269-residue polypeptide: RBPJ-interacting and tubulin-associated protein 1 (269 aa).

Positions V5–L17 match the Nuclear export signal motif. Disordered regions lie at residues V66–H105 and L141–K269. Over residues C80–L92 the composition is skewed to polar residues. The short motif at L92–S108 is the Nuclear localization signal element. The tract at residues R128–P156 is interaction with RBPJ/RBPSUH. The tract at residues P156–K269 is interaction with tubulin. The segment covering H200–S253 has biased composition (polar residues).

This sequence belongs to the RITA family. In terms of assembly, interacts with RBPJ/RBPSUH.

It is found in the cytoplasm. The protein localises to the nucleus. The protein resides in the cytoskeleton. Its subcellular location is the microtubule organizing center. It localises to the centrosome. Tubulin-binding protein that acts as a negative regulator of Notch signaling pathway. Shuttles between the cytoplasm and the nucleus and mediates the nuclear export of RBPJ/RBPSUH, thereby preventing the interaction between RBPJ/RBPSUH and NICD product of Notch proteins (Notch intracellular domain), leading to down-regulate Notch-mediated transcription. May play a role in neurogenesis. This is RBPJ-interacting and tubulin-associated protein 1 (RITA1) from Homo sapiens (Human).